Reading from the N-terminus, the 206-residue chain is Large ribosomal subunit protein uL4 (206 aa).

The tract at residues 46–77 (GTRAQKDREQVKHSTKKPFKQKGTGRARAGMT) is disordered. The span at 58 to 70 (HSTKKPFKQKGTG) shows a compositional bias: basic residues.

Belongs to the universal ribosomal protein uL4 family. As to quaternary structure, part of the 50S ribosomal subunit.

Functionally, one of the primary rRNA binding proteins, this protein initially binds near the 5'-end of the 23S rRNA. It is important during the early stages of 50S assembly. It makes multiple contacts with different domains of the 23S rRNA in the assembled 50S subunit and ribosome. In terms of biological role, forms part of the polypeptide exit tunnel. The polypeptide is Large ribosomal subunit protein uL4 (Albidiferax ferrireducens (strain ATCC BAA-621 / DSM 15236 / T118) (Rhodoferax ferrireducens)).